The following is a 187-amino-acid chain: Biphenyl 2,3-dioxygenase subunit beta (187 aa).

This sequence belongs to the bacterial ring-hydroxylating dioxygenase beta subunit family. Heterohexamer consisting of three BphA1 subunits and three BphA2 subunits. The multicomponent biphenyl dioxygenase system is composed of a ferredoxin reductase (BphA4), a ferredoxin (BphA3), and a terminal oxygenase (BphA1A2).

The enzyme catalyses biphenyl + NADH + O2 + H(+) = (2R,3S)-3-phenylcyclohexa-3,5-diene-1,2-diol + NAD(+). The protein operates within xenobiotic degradation; biphenyl degradation; 2-hydroxy-2,4-pentadienoate and benzoate from biphenyl: step 1/4. In terms of biological role, part of the oxygenase component of the biphenyl dioxygenase system that catalyzes the stereospecific dihydroxylation of the aromatic ring of biphenyl, yielding a dihydrodiol compound. Is likely involved in biphenyl degradation that allows growth of Rhodococcus sp. strain RHA1 on biphenyl as the sole source of carbon and energy. Can also use naphtalene and 4-chlorobiphenyl (4-CB) as substrates, as well as some polychlorinated biphenyls (PCB) such as 2,2'-dichlorobiphenyl, 2,3-dichlorobiphenyl and 2,5,2'-trichlorobiphenyl. Exhibits weak activity toward dibenzofuran and dibenzo-p-dioxin. Electrons are transferred from NADH to the [2Fe-2S] cluster in BphA1 via FAD of BphA4 and [2Fe-2S] cluster of BphA3. The chain is Biphenyl 2,3-dioxygenase subunit beta from Rhodococcus jostii (strain RHA1).